Here is a 160-residue protein sequence, read N- to C-terminus: Interleukin-36 alpha (160 aa).

A propeptide spanning residues 1–7 is cleaved from the precursor; sequence MNKEKEL. 3'-nitrotyrosine is present on tyrosine 98.

This sequence belongs to the IL-1 family. As to quaternary structure, interacts with TMED10; the interaction mediates the translocation from the cytoplasm into the ERGIC (endoplasmic reticulum-Golgi intermediate compartment) and thereby secretion. N-terminal truncation leads to a dramatic enhancement of its activity (&gt;1000-fold). Highly expressed in embryonic tissue and in tissues containing epithelial cells. Elevated expression levels are detected in chronic kidney disease; expressed inepithelia from the distal convoluted tubules (DCTs) to the cortical collecting ducts (CCDs) in single nephrons (at protein level).

The protein localises to the cytoplasm. The protein resides in the secreted. In terms of biological role, cytokine that binds to and signals through the IL1RL2/IL-36R receptor which in turn activates NF-kappa-B and MAPK signaling pathways in target cells linked to a pro-inflammatory response. Part of the IL-36 signaling system that is thought to be present in epithelial barriers and to take part in local inflammatory response; similar to the IL-1 system with which it shares the coreceptor IL1RAP. Seems to be involved in skin inflammatory response by acting on keratinocytes, dendritic cells and indirectly on T-cells to drive tissue infiltration, cell maturation and cell proliferation. Induces the production of pro-inflammatory cytokines, including IL-12, Il-1 beta, IL-6, TNF-alpha and IL-23 in bone marrow-derived dendritic cells (BMDCs). Involved in dendritic cell maturation by stimulating the surface expression of CD80, CD86 and MHC class II. Induces the production of IFN-gamma, IL-4 and IL-17 by cultured CD4(+) T-cells and splenocytes. May play a role in pro-inflammatory effects in the lung: induces the expression of CXCL1 and CXCL2 in the lung, and the expression of TNF-alpha, IL-36c, IL-1A, IL-1B, CXCL1 and CXCL2 in isolated splenic CD11c(+) alveolar macrophages. May be involved in T-cell maturation by stimulating the surface expression of CD40 and modestly CD80 and CD86 in splenic CD11c(+) cells. May be involved in CD4(+) T-cell proliferation. Induces NF-kappa B activation in macrophages. This Mus musculus (Mouse) protein is Interleukin-36 alpha.